The sequence spans 214 residues: Adenylate kinase (214 aa).

10 to 15 (GAGKGT) lines the ATP pocket. An NMP region spans residues 30 to 59 (STGDMLRAAVKAGTELGKQAKEIMDAGKLV). Residues Thr31, Arg36, 57 to 59 (KLV), 85 to 88 (GFPR), and Gln92 contribute to the AMP site. The segment at 122-159 (GRRVHAASGRVYHVKFNPPKVEGKDDVTGEDLTIRKDD) is LID. ATP is bound by residues Arg123 and 132–133 (VY). Arg156 and Arg167 together coordinate AMP. Arg200 provides a ligand contact to ATP.

This sequence belongs to the adenylate kinase family. Monomer.

It is found in the cytoplasm. It catalyses the reaction AMP + ATP = 2 ADP. It participates in purine metabolism; AMP biosynthesis via salvage pathway; AMP from ADP: step 1/1. In terms of biological role, catalyzes the reversible transfer of the terminal phosphate group between ATP and AMP. Plays an important role in cellular energy homeostasis and in adenine nucleotide metabolism. The protein is Adenylate kinase of Pectobacterium carotovorum subsp. carotovorum (strain PC1).